Here is a 379-residue protein sequence, read N- to C-terminus: 1-deoxy-D-xylulose 5-phosphate reductoisomerase (379 aa).

NADPH contacts are provided by T10, G11, S12, I13, R38, N39, and N121. K122 contacts 1-deoxy-D-xylulose 5-phosphate. Position 123 (E123) interacts with NADPH. Position 147 (D147) interacts with Mn(2+). The 1-deoxy-D-xylulose 5-phosphate site is built by S148, E149, S173, and H196. E149 contacts Mn(2+). NADPH is bound at residue G202. Residues S209, N214, K215, and E218 each contribute to the 1-deoxy-D-xylulose 5-phosphate site. Mn(2+) is bound at residue E218.

This sequence belongs to the DXR family. The cofactor is Mg(2+). Mn(2+) serves as cofactor.

The enzyme catalyses 2-C-methyl-D-erythritol 4-phosphate + NADP(+) = 1-deoxy-D-xylulose 5-phosphate + NADPH + H(+). Its pathway is isoprenoid biosynthesis; isopentenyl diphosphate biosynthesis via DXP pathway; isopentenyl diphosphate from 1-deoxy-D-xylulose 5-phosphate: step 1/6. Functionally, catalyzes the NADPH-dependent rearrangement and reduction of 1-deoxy-D-xylulose-5-phosphate (DXP) to 2-C-methyl-D-erythritol 4-phosphate (MEP). The polypeptide is 1-deoxy-D-xylulose 5-phosphate reductoisomerase (Chlamydia trachomatis serovar A (strain ATCC VR-571B / DSM 19440 / HAR-13)).